Reading from the N-terminus, the 95-residue chain is Co-chaperonin GroES (95 aa).

It belongs to the GroES chaperonin family. In terms of assembly, heptamer of 7 subunits arranged in a ring. Interacts with the chaperonin GroEL.

It is found in the cytoplasm. Functionally, together with the chaperonin GroEL, plays an essential role in assisting protein folding. The GroEL-GroES system forms a nano-cage that allows encapsulation of the non-native substrate proteins and provides a physical environment optimized to promote and accelerate protein folding. GroES binds to the apical surface of the GroEL ring, thereby capping the opening of the GroEL channel. The sequence is that of Co-chaperonin GroES from Clostridium botulinum (strain ATCC 19397 / Type A).